A 585-amino-acid chain; its full sequence is Putative ABC transporter ATP-binding protein MG187 (585 aa).

The 461-residue stretch at 8–468 (IELKNIVVDF…PANEFVARFL (461 aa)) folds into the ABC transporter domain. 40–47 (GPSGCGKT) is an ATP binding site.

It belongs to the ABC transporter superfamily.

The sequence is that of Putative ABC transporter ATP-binding protein MG187 from Mycoplasma genitalium (strain ATCC 33530 / DSM 19775 / NCTC 10195 / G37) (Mycoplasmoides genitalium).